The chain runs to 400 residues: Argininosuccinate synthase (400 aa).

ATP contacts are provided by residues 10–18 and Ala38; that span reads AYSGGVDTS. Position 89 (Tyr89) interacts with L-citrulline. Residue Gly119 coordinates ATP. L-aspartate contacts are provided by Thr121, Asn125, and Asp126. An L-citrulline-binding site is contributed by Asn125. L-citrulline-binding residues include Arg129, Ser177, Ser186, Glu262, and Tyr274.

It belongs to the argininosuccinate synthase family. Type 1 subfamily. Homotetramer.

The protein localises to the cytoplasm. It carries out the reaction L-citrulline + L-aspartate + ATP = 2-(N(omega)-L-arginino)succinate + AMP + diphosphate + H(+). The protein operates within amino-acid biosynthesis; L-arginine biosynthesis; L-arginine from L-ornithine and carbamoyl phosphate: step 2/3. This is Argininosuccinate synthase from Nostoc sp. (strain PCC 7120 / SAG 25.82 / UTEX 2576).